The chain runs to 541 residues: DNA ligase 1 (541 aa).

Glu-234 is a binding site for ATP. Catalysis depends on Lys-236, which acts as the N6-AMP-lysine intermediate. The ATP site is built by Arg-241, Arg-256, Glu-286, Phe-325, Arg-398, and Lys-404.

It belongs to the ATP-dependent DNA ligase family. Mg(2+) is required as a cofactor.

The enzyme catalyses ATP + (deoxyribonucleotide)n-3'-hydroxyl + 5'-phospho-(deoxyribonucleotide)m = (deoxyribonucleotide)n+m + AMP + diphosphate.. Functionally, DNA ligase that seals nicks in double-stranded DNA during DNA replication, DNA recombination and DNA repair. This is DNA ligase 1 from Korarchaeum cryptofilum (strain OPF8).